We begin with the raw amino-acid sequence, 338 residues long: Nicotinate-nucleotide--dimethylbenzimidazole phosphoribosyltransferase (338 aa).

Glu-305 functions as the Proton acceptor in the catalytic mechanism.

It belongs to the CobT family.

The enzyme catalyses 5,6-dimethylbenzimidazole + nicotinate beta-D-ribonucleotide = alpha-ribazole 5'-phosphate + nicotinate + H(+). It functions in the pathway nucleoside biosynthesis; alpha-ribazole biosynthesis; alpha-ribazole from 5,6-dimethylbenzimidazole: step 1/2. Its function is as follows. Catalyzes the synthesis of alpha-ribazole-5'-phosphate from nicotinate mononucleotide (NAMN) and 5,6-dimethylbenzimidazole (DMB). The sequence is that of Nicotinate-nucleotide--dimethylbenzimidazole phosphoribosyltransferase from Rhizobium johnstonii (strain DSM 114642 / LMG 32736 / 3841) (Rhizobium leguminosarum bv. viciae).